We begin with the raw amino-acid sequence, 372 residues long: MFEFEIKSNCSNTEARTGIFHTPNGQVNTPRFMPVGTLATVKGISSEQLISTGSEMILSNTFHLHLQPGEKLVKESGGIHKFMNWDKPILTDSGGYQVFSLAKLNNISDKGVEFRNPRDGSHVFLSPEKVMQIQMDLGSDVAMAFDHCPPHTANENDIEDSLERTHSWLQKCVETHQKSNQALFGIVQGGKYPRLREHSAKFTSSFDLPGIAVGGVSVGEAVEEIHSVINNVPKFLPINKPRYLMGIGSLREISLAVAKGFDIFDCVLPTRLGRHGTAFFNDERWNIRNARFKNDFSPIDKTCKCETCKSYSRAYLHHLVRNDEILGLTLISLHNISHLIRFTNAISAAIKDNCFTIDFAPWKRSSIAHHTW.

Aspartate 92 serves as the catalytic Proton acceptor. Substrate contacts are provided by residues 92–96, aspartate 146, glutamine 188, and glycine 215; that span reads DSGGY. The segment at 246–252 is RNA binding; the sequence is GIGSLRE. Aspartate 265 serves as the catalytic Nucleophile. An RNA binding; important for wobble base 34 recognition region spans residues 270 to 274; it reads TRLGR. Zn(2+) is bound by residues cysteine 303, cysteine 305, cysteine 308, and histidine 334.

This sequence belongs to the queuine tRNA-ribosyltransferase family. Homodimer. Within each dimer, one monomer is responsible for RNA recognition and catalysis, while the other monomer binds to the replacement base PreQ1. Zn(2+) serves as cofactor.

The catalysed reaction is 7-aminomethyl-7-carbaguanine + guanosine(34) in tRNA = 7-aminomethyl-7-carbaguanosine(34) in tRNA + guanine. The protein operates within tRNA modification; tRNA-queuosine biosynthesis. In terms of biological role, catalyzes the base-exchange of a guanine (G) residue with the queuine precursor 7-aminomethyl-7-deazaguanine (PreQ1) at position 34 (anticodon wobble position) in tRNAs with GU(N) anticodons (tRNA-Asp, -Asn, -His and -Tyr). Catalysis occurs through a double-displacement mechanism. The nucleophile active site attacks the C1' of nucleotide 34 to detach the guanine base from the RNA, forming a covalent enzyme-RNA intermediate. The proton acceptor active site deprotonates the incoming PreQ1, allowing a nucleophilic attack on the C1' of the ribose to form the product. After dissociation, two additional enzymatic reactions on the tRNA convert PreQ1 to queuine (Q), resulting in the hypermodified nucleoside queuosine (7-(((4,5-cis-dihydroxy-2-cyclopenten-1-yl)amino)methyl)-7-deazaguanosine). In Prochlorococcus marinus subsp. pastoris (strain CCMP1986 / NIES-2087 / MED4), this protein is Queuine tRNA-ribosyltransferase.